We begin with the raw amino-acid sequence, 101 residues long: Integration host factor subunit alpha (101 aa).

It belongs to the bacterial histone-like protein family. In terms of assembly, heterodimer of an alpha and a beta chain.

Functionally, this protein is one of the two subunits of integration host factor, a specific DNA-binding protein that functions in genetic recombination as well as in transcriptional and translational control. The sequence is that of Integration host factor subunit alpha from Saccharophagus degradans (strain 2-40 / ATCC 43961 / DSM 17024).